The chain runs to 606 residues: NADH-ubiquinone oxidoreductase chain 5 (606 aa).

A run of 16 helical transmembrane segments spans residues 4–24, 38–58, 87–107, 117–137, 140–160, 171–191, 211–233, 241–261, 273–293, 301–320, 325–347, 366–386, 413–433, 457–477, 488–508, and 584–604; these read FSSLMLASLSVLTLPIMSSIL, NIISYAFITSLIPTMMFIHSG, MIFVPVALFVTWSIMEFSLWY, FFKYLLTFLITMMILVTANNL, LFIGWEGVGIMSFLLIGWWYG, AILYNRIGDIGFIMAMAWFLF, LPLLGLLLAATGKSAQFGLHPWL, TPVSALLHSSTMVVAGVFLLI, IQSLTLCLGAITTLFTAICAL, IIAFSTSSQLGLMIVTIGIN, AFLHICTHAFFKAMLFMCSGSII, MPFTTTSLIIGSLALTGMPFL, LIATSLTAVYSTRIIFFALLG, LLIGSIFAGFFISNNIYPTTI, LTALTVTILGFTLALELSLIT, and IKLYFLSFLITLTLSMLLFNL.

The protein belongs to the complex I subunit 5 family. In terms of assembly, core subunit of respiratory chain NADH dehydrogenase (Complex I) which is composed of 45 different subunits.

The protein localises to the mitochondrion inner membrane. It catalyses the reaction a ubiquinone + NADH + 5 H(+)(in) = a ubiquinol + NAD(+) + 4 H(+)(out). Functionally, core subunit of the mitochondrial membrane respiratory chain NADH dehydrogenase (Complex I) which catalyzes electron transfer from NADH through the respiratory chain, using ubiquinone as an electron acceptor. Essential for the catalytic activity and assembly of complex I. This chain is NADH-ubiquinone oxidoreductase chain 5 (MT-ND5), found in Equus asinus (Donkey).